Reading from the N-terminus, the 639-residue chain is 1-deoxy-D-xylulose-5-phosphate synthase 1 (639 aa).

Thiamine diphosphate contacts are provided by residues H79 and A120–S122. D155 serves as a coordination point for Mg(2+). Thiamine diphosphate contacts are provided by residues G156–A157, N184, Y293, and E373. Residue N184 coordinates Mg(2+).

The protein belongs to the transketolase family. DXPS subfamily. Homodimer. Requires Mg(2+) as cofactor. Thiamine diphosphate is required as a cofactor.

The enzyme catalyses D-glyceraldehyde 3-phosphate + pyruvate + H(+) = 1-deoxy-D-xylulose 5-phosphate + CO2. It functions in the pathway metabolic intermediate biosynthesis; 1-deoxy-D-xylulose 5-phosphate biosynthesis; 1-deoxy-D-xylulose 5-phosphate from D-glyceraldehyde 3-phosphate and pyruvate: step 1/1. Functionally, catalyzes the acyloin condensation reaction between C atoms 2 and 3 of pyruvate and glyceraldehyde 3-phosphate to yield 1-deoxy-D-xylulose-5-phosphate (DXP). The protein is 1-deoxy-D-xylulose-5-phosphate synthase 1 of Jannaschia sp. (strain CCS1).